The primary structure comprises 132 residues: Telomere bouquet protein 1 (132 aa).

In terms of assembly, interacts with bqt2 and sad1. The bqt1-bqt2-sad1 complex binds rap1.

It localises to the cytoplasm. The protein resides in the cytoskeleton. Its subcellular location is the microtubule organizing center. The protein localises to the spindle pole body. It is found in the chromosome. It localises to the telomere. In terms of biological role, involved in chromosome segregation. During meiotic prophase, connects telomeres to the spindle pole body by forming a bridge between the telomere protein rap1 and the spindle pole body protein sad1. This is Telomere bouquet protein 1 (bqt1) from Schizosaccharomyces pombe (strain 972 / ATCC 24843) (Fission yeast).